Consider the following 303-residue polypeptide: Aspartate carbamoyltransferase catalytic subunit (303 aa).

Carbamoyl phosphate is bound by residues R51 and T52. K80 contacts L-aspartate. Residues R101, H129, and Q132 each coordinate carbamoyl phosphate. Residues R162 and R221 each coordinate L-aspartate. Carbamoyl phosphate-binding residues include L260 and P261.

It belongs to the aspartate/ornithine carbamoyltransferase superfamily. ATCase family. Heterooligomer of catalytic and regulatory chains.

The catalysed reaction is carbamoyl phosphate + L-aspartate = N-carbamoyl-L-aspartate + phosphate + H(+). It participates in pyrimidine metabolism; UMP biosynthesis via de novo pathway; (S)-dihydroorotate from bicarbonate: step 2/3. Catalyzes the condensation of carbamoyl phosphate and aspartate to form carbamoyl aspartate and inorganic phosphate, the committed step in the de novo pyrimidine nucleotide biosynthesis pathway. The sequence is that of Aspartate carbamoyltransferase catalytic subunit from Saccharolobus solfataricus (strain ATCC 35092 / DSM 1617 / JCM 11322 / P2) (Sulfolobus solfataricus).